Here is a 494-residue protein sequence, read N- to C-terminus: Nuclear distribution protein PAC1 (494 aa).

Residues 14 to 46 enclose the LisH domain; the sequence is QKNELDKSVLRYLNWNYKQTVRHEHAQDYESVR. Positions 90-123 form a coiled coil; it reads NSIVRLQKKIIELEQNTETLVSQIKDLNTQVSEL. WD repeat units follow at residues 153–192, 196–244, 251–292, 295–334, 347–395, 415–454, and 457–492; these read NVES…IPLA, SHTK…CKFQ, GHEH…SLKT, PHSQ…SVGT, HFIE…LMAH, GHLS…HVWE, and HTGF…SNVF.

Belongs to the WD repeat LIS1/nudF family. Self-associates. Interacts with NDL1 and dynein.

Its subcellular location is the cytoplasm. It is found in the cytoskeleton. The protein localises to the spindle pole. Functionally, positively regulates the activity of the minus-end directed microtubule motor protein dynein. Plays a central role in positioning the mitotic spindle at the bud neck during cell division. Targets cytoplasmic dynein to microtubule plus ends, thereby promoting dynein-mediated microtubule sliding along the bud cortex and consequently the movement of the mitotic spindle to the bud neck. The chain is Nuclear distribution protein PAC1 from Saccharomyces cerevisiae (strain RM11-1a) (Baker's yeast).